The sequence spans 391 residues: Elongation factor Tu (391 aa).

The tr-type G domain maps to 10 to 201; the sequence is KPHVNIGTIG…QVDAYIPTPV (192 aa). A G1 region spans residues 19-26; it reads GHVDHGKT. Residue 19-26 coordinates GTP; that stretch reads GHVDHGKT. Residue Thr26 coordinates Mg(2+). The segment at 55–59 is G2; it reads GITIS. The G3 stretch occupies residues 76–79; it reads DCPG. GTP-binding positions include 76–80 and 131–134; these read DCPGH and NKVD. The G4 stretch occupies residues 131–134; it reads NKVD. The tract at residues 169 to 171 is G5; it reads SAL.

The protein belongs to the TRAFAC class translation factor GTPase superfamily. Classic translation factor GTPase family. EF-Tu/EF-1A subfamily. In terms of assembly, monomer.

It is found in the cytoplasm. The catalysed reaction is GTP + H2O = GDP + phosphate + H(+). Functionally, GTP hydrolase that promotes the GTP-dependent binding of aminoacyl-tRNA to the A-site of ribosomes during protein biosynthesis. In Mesorhizobium japonicum (strain LMG 29417 / CECT 9101 / MAFF 303099) (Mesorhizobium loti (strain MAFF 303099)), this protein is Elongation factor Tu.